Here is a 154-residue protein sequence, read N- to C-terminus: tRNA (cytidine(34)-2'-O)-methyltransferase (154 aa).

4 residues coordinate S-adenosyl-L-methionine: Leu-78, Gly-100, Leu-122, and Ser-130.

It belongs to the class IV-like SAM-binding methyltransferase superfamily. RNA methyltransferase TrmH family. TrmL subfamily. In terms of assembly, homodimer.

It localises to the cytoplasm. The enzyme catalyses cytidine(34) in tRNA + S-adenosyl-L-methionine = 2'-O-methylcytidine(34) in tRNA + S-adenosyl-L-homocysteine + H(+). The catalysed reaction is 5-carboxymethylaminomethyluridine(34) in tRNA(Leu) + S-adenosyl-L-methionine = 5-carboxymethylaminomethyl-2'-O-methyluridine(34) in tRNA(Leu) + S-adenosyl-L-homocysteine + H(+). In terms of biological role, methylates the ribose at the nucleotide 34 wobble position in the two leucyl isoacceptors tRNA(Leu)(CmAA) and tRNA(Leu)(cmnm5UmAA). Catalyzes the methyl transfer from S-adenosyl-L-methionine to the 2'-OH of the wobble nucleotide. The sequence is that of tRNA (cytidine(34)-2'-O)-methyltransferase from Methylovorus glucosotrophus (strain SIP3-4).